Here is a 429-residue protein sequence, read N- to C-terminus: Enolase (429 aa).

Gln-163 lines the (2R)-2-phosphoglycerate pocket. Glu-205 serves as the catalytic Proton donor. Mg(2+) is bound by residues Asp-242, Glu-287, and Asp-314. Residues Lys-339, Arg-368, Ser-369, and Lys-390 each contribute to the (2R)-2-phosphoglycerate site. Lys-339 acts as the Proton acceptor in catalysis.

The protein belongs to the enolase family. It depends on Mg(2+) as a cofactor.

It is found in the cytoplasm. The protein localises to the secreted. The protein resides in the cell surface. It carries out the reaction (2R)-2-phosphoglycerate = phosphoenolpyruvate + H2O. It functions in the pathway carbohydrate degradation; glycolysis; pyruvate from D-glyceraldehyde 3-phosphate: step 4/5. In terms of biological role, catalyzes the reversible conversion of 2-phosphoglycerate (2-PG) into phosphoenolpyruvate (PEP). It is essential for the degradation of carbohydrates via glycolysis. This Cupriavidus pinatubonensis (strain JMP 134 / LMG 1197) (Cupriavidus necator (strain JMP 134)) protein is Enolase.